Reading from the N-terminus, the 288-residue chain is Bifunctional protein FolD (288 aa).

NADP(+) is bound by residues 166–168, Ser-191, and Ile-232; that span reads GRS.

The protein belongs to the tetrahydrofolate dehydrogenase/cyclohydrolase family. As to quaternary structure, homodimer.

The enzyme catalyses (6R)-5,10-methylene-5,6,7,8-tetrahydrofolate + NADP(+) = (6R)-5,10-methenyltetrahydrofolate + NADPH. It catalyses the reaction (6R)-5,10-methenyltetrahydrofolate + H2O = (6R)-10-formyltetrahydrofolate + H(+). It functions in the pathway one-carbon metabolism; tetrahydrofolate interconversion. Catalyzes the oxidation of 5,10-methylenetetrahydrofolate to 5,10-methenyltetrahydrofolate and then the hydrolysis of 5,10-methenyltetrahydrofolate to 10-formyltetrahydrofolate. The polypeptide is Bifunctional protein FolD (Rickettsia massiliae (strain Mtu5)).